The primary structure comprises 121 residues: Putative iron-sulfur cluster insertion protein ErpA (121 aa).

Positions 49, 113, and 115 each coordinate iron-sulfur cluster.

It belongs to the HesB/IscA family. In terms of assembly, homodimer. Requires iron-sulfur cluster as cofactor.

In terms of biological role, required for insertion of 4Fe-4S clusters. The sequence is that of Putative iron-sulfur cluster insertion protein ErpA from Verminephrobacter eiseniae (strain EF01-2).